Here is a 193-residue protein sequence, read N- to C-terminus: Putative RNA methyltransferase At5g10620 (193 aa).

Residues Leu-110, Gly-142, and 161-166 contribute to the S-adenosyl-L-methionine site; that span reads LSSMVL.

This sequence belongs to the RNA methyltransferase RlmH family.

This Arabidopsis thaliana (Mouse-ear cress) protein is Putative RNA methyltransferase At5g10620.